The chain runs to 664 residues: Protein fem-1 homolog CG6966 (664 aa).

ANK repeat units follow at residues 40–70 (NGAT…NVEQ), 82–111 (EDAP…NVNS), 115–144 (TNST…DFEV), 148–177 (HGHT…DVNR), 181–210 (KGNT…TMDV), and 213–242 (YGMT…VSRE). TPR repeat units follow at residues 245 to 279 (IHAL…RAVE) and 335 to 368 (SYYI…QQKI). Residues 433-460 (QQKDQQHPQKQLPAADKSPSCSASSSAS) form a disordered region. Over residues 450 to 460 (SPSCSASSSAS) the composition is skewed to low complexity. 2 ANK repeats span residues 529-571 (FDRT…DPNA) and 575-605 (AGNT…HLDT).

The protein belongs to the fem-1 family. In terms of assembly, component of a CRL2 E3 ubiquitin-protein ligase complex, also named ECS (Elongin BC-CUL2/5-SOCS-box protein) complex.

It participates in protein modification; protein ubiquitination. Substrate-recognition component of a Cul2-RING (CRL2) E3 ubiquitin-protein ligase complex of the DesCEND (destruction via C-end degrons) pathway, which recognizes a C-degron located at the extreme C terminus of target proteins, leading to their ubiquitination and degradation. The C-degron recognized by the DesCEND pathway is usually a motif of less than ten residues and can be present in full-length proteins, truncated proteins or proteolytically cleaved forms. The sequence is that of Protein fem-1 homolog CG6966 from Drosophila melanogaster (Fruit fly).